A 368-amino-acid polypeptide reads, in one-letter code: H-2 class I histocompatibility antigen, K-D alpha chain (368 aa).

The N-terminal stretch at 1–21 (MAPCTLLLLLAAALAPTQTRA) is a signal peptide. The segment at 22 to 111 (GPHSLRYFVT…AQRYYNQSKG (90 aa)) is alpha-1. At 22-305 (GPHSLRYFVT…KLPPSTVSNT (284 aa)) the chain is on the extracellular side. A glycan (N-linked (GlcNAc...) asparagine) is linked at N107. The interval 112–203 (GSHTFQRMFG…ELGNETLLRT (92 aa)) is alpha-2. The cysteines at positions 122 and 185 are disulfide-linked. N197 and N277 each carry an N-linked (GlcNAc...) asparagine glycan. Residues 204-295 (DSPKAHVTYH…GLPEPLTLRW (92 aa)) form an alpha-3 region. Residues 206-294 (PKAHVTYHPR…KGLPEPLTLR (89 aa)) form the Ig-like C1-type domain. A disulfide bridge connects residues C224 and C280. Positions 296-305 (KLPPSTVSNT) are connecting peptide. The helical transmembrane segment at 306-328 (VIIAVLVVLGAAIVTGAVVAFVM) threads the bilayer. Residues 329–368 (KMRRNTGGKGVNYALAPGSQTSDLSLPDGKVMVHDPHSLA) are Cytoplasmic-facing. Phosphoserine is present on residues S350 and S353.

It belongs to the MHC class I family. As to quaternary structure, heterodimer of an alpha chain and a beta chain (beta-2-microglobulin).

Its subcellular location is the membrane. Its function is as follows. Involved in the presentation of foreign antigens to the immune system. The chain is H-2 class I histocompatibility antigen, K-D alpha chain (H2-K1) from Mus musculus (Mouse).